The chain runs to 182 residues: Large ribosomal subunit protein bL19m (182 aa).

A mitochondrion-targeting transit peptide spans 1–21 (MFNAKHFFNLGLGFQWLQKRG).

It belongs to the bacterial ribosomal protein bL19 family. Component of the mitochondrial large ribosomal subunit (mt-LSU). Mature yeast 74S mitochondrial ribosomes consist of a small (37S) and a large (54S) subunit. The 37S small subunit contains a 15S ribosomal RNA (15S mt-rRNA) and at least 32 different proteins. The 54S large subunit contains a 21S rRNA (21S mt-rRNA) and at least 45 different proteins.

It is found in the mitochondrion. Functionally, component of the mitochondrial ribosome (mitoribosome), a dedicated translation machinery responsible for the synthesis of mitochondrial genome-encoded proteins, including at least some of the essential transmembrane subunits of the mitochondrial respiratory chain. The mitoribosomes are attached to the mitochondrial inner membrane and translation products are cotranslationally integrated into the membrane. bL19m is essential for respiration. This chain is Large ribosomal subunit protein bL19m (img1), found in Schizosaccharomyces pombe (strain 972 / ATCC 24843) (Fission yeast).